The sequence spans 203 residues: Recombination protein RecR (203 aa).

Residues 56 to 71 form a C4-type zinc finger; that stretch reads CAVCGNVSDDERCRIC. Residues 79–179 enclose the Toprim domain; it reads ALVCVVEEPK…TVTRIASGLP (101 aa).

Belongs to the RecR family.

Functionally, may play a role in DNA repair. It seems to be involved in an RecBC-independent recombinational process of DNA repair. It may act with RecF and RecO. This chain is Recombination protein RecR, found in Mycobacterium ulcerans (strain Agy99).